An 84-amino-acid chain; its full sequence is Small, acid-soluble spore protein gamma-type (84 aa).

2 stretches are compositionally biased toward polar residues: residues 1 to 25 (MANSNNFSKTNAQQVRKQNQQSAAG) and 34 to 44 (ASETNAQQVRK). Residues 1 to 84 (MANSNNFSKT…SAEQNKQQNS (84 aa)) form a disordered region. 2 consecutive repeats follow at residues 21 to 47 (QSAAGQGQFGTEFASETNAQQVRKQNQ) and 48 to 74 (QSAGQQGQFGTEFASETDAQQVRQQNQ). Low complexity-rich tracts occupy residues 45 to 57 (QNQQSAGQQGQFG) and 71 to 84 (QQNQSAEQNKQQNS).

This sequence belongs to the gamma-type SASP family.

Functionally, SASP are proteins degraded in the first minutes of spore germination and provide amino acids for both new protein synthesis and metabolism. These proteins may be involved in dormant spore's high resistance to UV light. The chain is Small, acid-soluble spore protein gamma-type (sspE) from Bacillus subtilis (strain 168).